A 67-amino-acid polypeptide reads, in one-letter code: Kappa-conotoxin-like 1 (67 aa).

An N-terminal signal peptide occupies residues 1–26 (MMFRLTSVSCFLLVIACLNLFQVVLT). Cystine bridges form between Cys-29/Cys-43, Cys-36/Cys-48, Cys-42/Cys-51, and Cys-47/Cys-55. An Isoleucine amide modification is found at Ile-59. Positions 63 to 67 (ATFQE) are excised as a propeptide.

The protein belongs to the conotoxin I2 superfamily. Expressed by the venom duct.

Its subcellular location is the secreted. Functionally, inhibits the vertebrate voltage-gated potassium channels Kv1.1/KCNA1 and Kv1.3/KCNA3. The protein is Kappa-conotoxin-like 1 of Conus vexillum (Flag cone).